The following is a 257-amino-acid chain: 5'-nucleotidase SurE (257 aa).

A divalent metal cation is bound by residues Asp-8, Asp-9, Ser-40, and Asn-92.

This sequence belongs to the SurE nucleotidase family. It depends on a divalent metal cation as a cofactor.

It localises to the cytoplasm. The enzyme catalyses a ribonucleoside 5'-phosphate + H2O = a ribonucleoside + phosphate. Functionally, nucleotidase that shows phosphatase activity on nucleoside 5'-monophosphates. In Rhizobium leguminosarum bv. trifolii (strain WSM2304), this protein is 5'-nucleotidase SurE.